The sequence spans 227 residues: ATP synthase F(0) complex subunit a (227 aa).

Helical transmembrane passes span 12–32, 69–89, 98–118, 139–159, 170–190, and 196–216; these read PCLL…LLLP, WALL…LGLL, QLSM…LTGL, IPAL…ALGV, LLIQ…PSIS, and ILFL…YVFV.

Belongs to the ATPase A chain family. In terms of assembly, component of the ATP synthase complex composed at least of ATP5F1A/subunit alpha, ATP5F1B/subunit beta, ATP5MC1/subunit c (homooctomer), MT-ATP6/subunit a, MT-ATP8/subunit 8, ATP5ME/subunit e, ATP5MF/subunit f, ATP5MG/subunit g, ATP5MK/subunit k, ATP5MJ/subunit j, ATP5F1C/subunit gamma, ATP5F1D/subunit delta, ATP5F1E/subunit epsilon, ATP5PF/subunit F6, ATP5PB/subunit b, ATP5PD/subunit d, ATP5PO/subunit OSCP. ATP synthase complex consists of a soluble F(1) head domain (subunits alpha(3) and beta(3)) - the catalytic core - and a membrane F(0) domain - the membrane proton channel (subunits c, a, 8, e, f, g, k and j). These two domains are linked by a central stalk (subunits gamma, delta, and epsilon) rotating inside the F1 region and a stationary peripheral stalk (subunits F6, b, d, and OSCP). Interacts with DNAJC30; interaction is direct.

It localises to the mitochondrion inner membrane. The enzyme catalyses H(+)(in) = H(+)(out). In terms of biological role, subunit a, of the mitochondrial membrane ATP synthase complex (F(1)F(0) ATP synthase or Complex V) that produces ATP from ADP in the presence of a proton gradient across the membrane which is generated by electron transport complexes of the respiratory chain. ATP synthase complex consist of a soluble F(1) head domain - the catalytic core - and a membrane F(1) domain - the membrane proton channel. These two domains are linked by a central stalk rotating inside the F(1) region and a stationary peripheral stalk. During catalysis, ATP synthesis in the catalytic domain of F(1) is coupled via a rotary mechanism of the central stalk subunits to proton translocation. With the subunit c (ATP5MC1), forms the proton-conducting channel in the F(0) domain, that contains two crucial half-channels (inlet and outlet) that facilitate proton movement from the mitochondrial intermembrane space (IMS) into the matrix. Protons are taken up via the inlet half-channel and released through the outlet half-channel, following a Grotthuss mechanism. The protein is ATP synthase F(0) complex subunit a of Gallus gallus (Chicken).